The sequence spans 616 residues: E3 ubiquitin-protein ligase DTX4 (616 aa).

WWE domains follow at residues Met-1–Arg-78 and Asn-79–Arg-155. Disordered stretches follow at residues Val-223–Val-254 and Pro-355–Pro-387. A compositionally biased stretch (basic residues) spans Lys-375–Gly-384. Residues Cys-406–Lys-465 form an RING-type; atypical zinc finger.

It belongs to the Deltex family. As to quaternary structure, interacts with NLRP4. Expressed in brain, testis, embryonic fibroblasts and thymocytes.

It is found in the cytoplasm. The catalysed reaction is S-ubiquitinyl-[E2 ubiquitin-conjugating enzyme]-L-cysteine + [acceptor protein]-L-lysine = [E2 ubiquitin-conjugating enzyme]-L-cysteine + N(6)-ubiquitinyl-[acceptor protein]-L-lysine.. It functions in the pathway protein modification; protein ubiquitination. Functionally, functions as a ubiquitin ligase protein in vivo, mediating 'Lys48'-linked polyubiquitination and promoting degradation of TBK1, targeting to TBK1 requires interaction with NLRP4. Regulator of Notch signaling, a signaling pathway involved in cell-cell communications that regulates a broad spectrum of cell-fate determinations. In Mus musculus (Mouse), this protein is E3 ubiquitin-protein ligase DTX4 (Dtx4).